The primary structure comprises 490 residues: N-succinylglutamate 5-semialdehyde dehydrogenase (490 aa).

223–228 (GSAGTG) is an NAD(+) binding site. Catalysis depends on residues Glu246 and Cys280.

The protein belongs to the aldehyde dehydrogenase family. AstD subfamily.

The enzyme catalyses N-succinyl-L-glutamate 5-semialdehyde + NAD(+) + H2O = N-succinyl-L-glutamate + NADH + 2 H(+). It participates in amino-acid degradation; L-arginine degradation via AST pathway; L-glutamate and succinate from L-arginine: step 4/5. Its function is as follows. Catalyzes the NAD-dependent reduction of succinylglutamate semialdehyde into succinylglutamate. The sequence is that of N-succinylglutamate 5-semialdehyde dehydrogenase from Serratia proteamaculans (strain 568).